The chain runs to 82 residues: Defensin-like protein 75 (82 aa).

An N-terminal signal peptide occupies residues 1–26 (MAKIKSLDVITVAIILLLVIADQATA). Intrachain disulfides connect cysteine 33/cysteine 66, cysteine 37/cysteine 55, cysteine 41/cysteine 64, and cysteine 45/cysteine 65.

The protein belongs to the DEFL family.

It localises to the secreted. The protein is Defensin-like protein 75 (LCR45) of Arabidopsis thaliana (Mouse-ear cress).